Here is a 189-residue protein sequence, read N- to C-terminus: Interleukin-23 subunit alpha (189 aa).

The signal sequence occupies residues 1 to 19 (MLGSTAVMLLLLLPWTAQT).

It belongs to the IL-6 superfamily. Heterodimer with IL12B; disulfide-linked. The heterodimer is known as interleukin IL-23. Interacts with IL23R; this interaction enables recruitment of IL12RB1.

It localises to the secreted. In terms of biological role, associates with IL12B to form the pro-inflammatory cytokine IL-23 that plays different roles in innate and adaptive immunity. Released by antigen-presenting cells such as dendritic cells or macrophages, binds to a heterodimeric receptor complex composed of IL12RB1 and IL23R to activate JAK2 and TYK2 which then phosphorylate the receptor to form a docking site leading to the phosphorylation of STAT3 and STAT4. This process leads to activation of several pathways including p38 MAPK or NF-kappa-B and promotes the production of pro-inflammatory cytokines such as interleukin-17A/IL17A. In turn, participates in the early and effective intracellular bacterial clearance. Promotes the expansion and survival of T-helper 17 cells, a CD4-positive helper T-cell subset that produces IL-17, as well as other IL-17-producing cells. In Cavia porcellus (Guinea pig), this protein is Interleukin-23 subunit alpha (IL23A).